The sequence spans 368 residues: Propane 2-monooxygenase, hydroxylase component small subunit (368 aa).

Belongs to the TmoE/XamoE family. In terms of assembly, the propane 2-monooxygenase multicomponent enzyme system is composed of an electron transfer component and a monooxygenase component interacting with the effector protein MimD. The electron transfer component is composed of a reductase (MimB), and the monooxygenase component is formed by a large subunit (MimA) and a small subunit (MimC). Requires the presence of the chaperonin-like protein MimG to ensure a productive folding, resulting of a soluble MimC, which leads to the active form of MimABCD.

The catalysed reaction is propane + NADH + O2 + H(+) = propan-2-ol + NAD(+) + H2O. It catalyses the reaction acetone + NADH + O2 + H(+) = hydroxyacetone + NAD(+) + H2O. It carries out the reaction butan-2-one + NADH + O2 + H(+) = 1-hydroxy-2-butanone + NAD(+) + H2O. The enzyme catalyses phenol + NADH + O2 + H(+) = hydroquinone + NAD(+) + H2O. Functionally, component of the propane 2-monooxygenase multicomponent enzyme system which is involved in the degradation of propane via the O2-dependent hydroxylation of propane. Also involved in the degradation of acetone via the O2-dependent hydroxylation of acetone. Also able to catalyze the oxidation of phenol, methylethylketone (2-butanone), 1-propanol and 2-propanol. This chain is Propane 2-monooxygenase, hydroxylase component small subunit, found in Mycolicibacterium goodii (Mycobacterium goodii).